Here is a 658-residue protein sequence, read N- to C-terminus: MFQNNPLLAQLKQQIEANKEYVEGTVKASDKAFGFLECDKKSYFIPPMEMKKVMHGDKVKAVVKREDDKEQVEIDSLLEPMLDRFIAQVRFNKDNKLQLIVDHPSIKNIIPANTHKKVTETLESGDWVVAQLKTHPLRDDRFLFAQVTQFICKADDNFAPWWVTLARHEQPREPVANEKSYELHDELDREDLTSLYFTTIDSPSTQDMDDALYIEPIKQGEVQTGWRLVVAIADPTAYIPENSNLEKAARQRCFTNYLPGFNIPMLPRELSDDLCSLVPNEKRPALVGYIETDLAGNITGDTRFVSAWVESKAKLAYDNVSDYLEQVENAWQPESAETKQQIDWLHQFTLARIEWRRNNALLFKESGDYSFELNEDGSVRDIHVEYRRIANQMIEESMIIANICCAKFLADNAKTGVFNTHAGFDPKNLESAQKFLLDTLSTDENRDALTAFYAPEKLATLEGYCEMRRSIDEFPEKFLELRLRRYLTFAEFKSEVAPHLGLGISHYATWTSPIRKYGDMVNHRLIKQVLLGKQAKTVEEGILVRLQEARRQNRLVERDIADWLYARYLFPMVEQAVEFDCEIADVSRGGVRAKVIANGAQIFVPFSTLHDKKEEMEFRPEEIALYIKGEKAYQIGQAVKVKLTEVRLETRSIVGNII.

An RNB domain is found at 189 to 530; it reads REDLTSLYFT…VNHRLIKQVL (342 aa). The 83-residue stretch at 576–658 folds into the S1 motif domain; the sequence is AVEFDCEIAD…ETRSIVGNII (83 aa).

The protein belongs to the RNR ribonuclease family. RNase II subfamily.

The protein resides in the cytoplasm. It catalyses the reaction Exonucleolytic cleavage in the 3'- to 5'-direction to yield nucleoside 5'-phosphates.. In terms of biological role, involved in mRNA degradation. Hydrolyzes single-stranded polyribonucleotides processively in the 3' to 5' direction. This Actinobacillus pleuropneumoniae serotype 3 (strain JL03) protein is Exoribonuclease 2.